A 404-amino-acid chain; its full sequence is Riboflavin biosynthesis protein RibBA (404 aa).

Residues 1–204 are DHBP synthase; sequence MEELKLNTIE…IRDLIAYRLK (204 aa). D-ribulose 5-phosphate is bound by residues 30–31, Asp35, 143–147, and Glu167; these read RE and RAGHT. Glu31 provides a ligand contact to Mg(2+). Residue His146 participates in Mg(2+) binding. Positions 205-404 are GTP cyclohydrolase II; it reads QESLVEKGVE…RMGHTLHFNK (200 aa). Position 255 to 259 (255 to 259) interacts with GTP; it reads RVHSS. Cys260, Cys271, and Cys273 together coordinate Zn(2+). Residues Gln276, 298-300, and Thr320 contribute to the GTP site; that span reads EGR. Asp332 (proton acceptor; for GTP cyclohydrolase activity) is an active-site residue. Arg334 acts as the Nucleophile; for GTP cyclohydrolase activity in catalysis. Thr355 and Lys360 together coordinate GTP.

In the N-terminal section; belongs to the DHBP synthase family. This sequence in the C-terminal section; belongs to the GTP cyclohydrolase II family. Requires Mg(2+) as cofactor. The cofactor is Mn(2+). It depends on Zn(2+) as a cofactor.

It catalyses the reaction D-ribulose 5-phosphate = (2S)-2-hydroxy-3-oxobutyl phosphate + formate + H(+). The catalysed reaction is GTP + 4 H2O = 2,5-diamino-6-hydroxy-4-(5-phosphoribosylamino)-pyrimidine + formate + 2 phosphate + 3 H(+). The protein operates within cofactor biosynthesis; riboflavin biosynthesis; 2-hydroxy-3-oxobutyl phosphate from D-ribulose 5-phosphate: step 1/1. It functions in the pathway cofactor biosynthesis; riboflavin biosynthesis; 5-amino-6-(D-ribitylamino)uracil from GTP: step 1/4. In terms of biological role, catalyzes the conversion of D-ribulose 5-phosphate to formate and 3,4-dihydroxy-2-butanone 4-phosphate. Its function is as follows. Catalyzes the conversion of GTP to 2,5-diamino-6-ribosylamino-4(3H)-pyrimidinone 5'-phosphate (DARP), formate and pyrophosphate. This chain is Riboflavin biosynthesis protein RibBA, found in Phocaeicola vulgatus (strain ATCC 8482 / DSM 1447 / JCM 5826 / CCUG 4940 / NBRC 14291 / NCTC 11154) (Bacteroides vulgatus).